Consider the following 318-residue polypeptide: Ribosomal RNA small subunit methyltransferase H (318 aa).

S-adenosyl-L-methionine-binding positions include 38 to 40 (GGH), aspartate 58, tyrosine 86, aspartate 107, and glutamine 114.

This sequence belongs to the methyltransferase superfamily. RsmH family.

The protein resides in the cytoplasm. The enzyme catalyses cytidine(1402) in 16S rRNA + S-adenosyl-L-methionine = N(4)-methylcytidine(1402) in 16S rRNA + S-adenosyl-L-homocysteine + H(+). Functionally, specifically methylates the N4 position of cytidine in position 1402 (C1402) of 16S rRNA. In Methylibium petroleiphilum (strain ATCC BAA-1232 / LMG 22953 / PM1), this protein is Ribosomal RNA small subunit methyltransferase H.